The chain runs to 237 residues: Probable transcriptional regulatory protein Fjoh_2560 (237 aa).

Belongs to the TACO1 family.

The protein localises to the cytoplasm. This chain is Probable transcriptional regulatory protein Fjoh_2560, found in Flavobacterium johnsoniae (strain ATCC 17061 / DSM 2064 / JCM 8514 / BCRC 14874 / CCUG 350202 / NBRC 14942 / NCIMB 11054 / UW101) (Cytophaga johnsonae).